Here is a 690-residue protein sequence, read N- to C-terminus: MTTETFLVEIGTEELPPKALRSLAESFATHFTAELDNANITHGDVSWFAAPRRLAIKVANMAKSQADRIVEKRGPAIAQAFDAEGKPTKAAEGWARGNGITVDQAERLSTDKGEWLFYRAEVKGEAVNQLLAGMVSNALAKLPIPKLMRWGDKETHFVRPVHTVTLLLGDTLIDGEILGVQSARIIRGHRFMGEAEFTIDNADQYPEILYERGKVIADYENRKSIILHDARLAAEKLGGVADLSDSLVEEVTSLVEWPVVLTAKFEEKFLEVPAEALVYTMKGDQKYFPVYDKQGALLPHFIFVSNIESSDPQQIISGNEKVVRPRLADAEFFFKTDRKQRLEDNLPRLETVLFQKNLGSLRDKTDRIQALAGFIAEKMGADVNKATRAGLLSKCDLMTNMVFEFTDTQGVMGMHYARHDGEDEEVAVALKEQYQPRFAGDALPSNPVASAVAIAEKMDTLAGIFGIGQHPKGDKDPFALRRAALGVLRIIVEQDLPLDIEELTQEAARLYGDKLTNQNVVSDVVEFMLGRFRAWYQELGYSIDTIQAVLARRPTQPADFNARVKAVTYFRTLEEAAALAEANKRVSNILAKSADVKLNDKVLASVLKAPEEVQLAANLSVLQDKLAPLFAERKYQEALVELASLRDVVNNFFDKVMVMDKDEEIRVNRLTMLHELRELFLKVADISVLQ.

Belongs to the class-II aminoacyl-tRNA synthetase family. In terms of assembly, tetramer of two alpha and two beta subunits.

Its subcellular location is the cytoplasm. It catalyses the reaction tRNA(Gly) + glycine + ATP = glycyl-tRNA(Gly) + AMP + diphosphate. The chain is Glycine--tRNA ligase beta subunit from Proteus mirabilis (strain HI4320).